Here is a 650-residue protein sequence, read N- to C-terminus: Acetyl-coenzyme A synthetase (650 aa).

CoA contacts are provided by residues 191-194 (RGGR), threonine 311, and asparagine 335. Residues 387-389 (GEP), 411-416 (DTWWQT), aspartate 500, and arginine 515 each bind ATP. Position 523 (serine 523) interacts with CoA. Position 526 (arginine 526) interacts with ATP. The Mg(2+) site is built by valine 537, histidine 539, and valine 542. Arginine 584 serves as a coordination point for CoA. Lysine 609 bears the N6-acetyllysine mark.

This sequence belongs to the ATP-dependent AMP-binding enzyme family. Mg(2+) is required as a cofactor. Post-translationally, acetylated. Deacetylation by the SIR2-homolog deacetylase activates the enzyme.

It carries out the reaction acetate + ATP + CoA = acetyl-CoA + AMP + diphosphate. Catalyzes the conversion of acetate into acetyl-CoA (AcCoA), an essential intermediate at the junction of anabolic and catabolic pathways. AcsA undergoes a two-step reaction. In the first half reaction, AcsA combines acetate with ATP to form acetyl-adenylate (AcAMP) intermediate. In the second half reaction, it can then transfer the acetyl group from AcAMP to the sulfhydryl group of CoA, forming the product AcCoA. The polypeptide is Acetyl-coenzyme A synthetase (Shewanella amazonensis (strain ATCC BAA-1098 / SB2B)).